We begin with the raw amino-acid sequence, 205 residues long: ATP phosphoribosyltransferase (205 aa).

This sequence belongs to the ATP phosphoribosyltransferase family. Short subfamily. As to quaternary structure, heteromultimer composed of HisG and HisZ subunits.

The protein localises to the cytoplasm. The enzyme catalyses 1-(5-phospho-beta-D-ribosyl)-ATP + diphosphate = 5-phospho-alpha-D-ribose 1-diphosphate + ATP. It participates in amino-acid biosynthesis; L-histidine biosynthesis; L-histidine from 5-phospho-alpha-D-ribose 1-diphosphate: step 1/9. In terms of biological role, catalyzes the condensation of ATP and 5-phosphoribose 1-diphosphate to form N'-(5'-phosphoribosyl)-ATP (PR-ATP). Has a crucial role in the pathway because the rate of histidine biosynthesis seems to be controlled primarily by regulation of HisG enzymatic activity. The polypeptide is ATP phosphoribosyltransferase (Staphylococcus carnosus (strain TM300)).